We begin with the raw amino-acid sequence, 387 residues long: Acyl-CoA dehydrogenase FadE29 (387 aa).

FAD-binding positions include 123-126 (IGYT), Thr132, and Thr158. The Proton acceptor role is filled by Glu241. Residue 367–369 (VNE) participates in FAD binding.

This sequence belongs to the acyl-CoA dehydrogenase family. In terms of assembly, heterotetramer composed of FadE28 and FadE29. FAD serves as cofactor.

The enzyme catalyses 3-oxochol-4-en-22-oyl-CoA + A = 3-oxochola-4,17-dien-22-oyl-CoA + AH2. Its pathway is steroid metabolism; cholesterol degradation. Its function is as follows. Involved in the third cycle of side chain dehydrogenation in the beta-oxidation of cholesterol catabolism. Contributes partly to the virulence by increasing the efficiency of beta-oxidation. Catalyzes the dehydrogenation of 2'-propanoyl-CoA ester side chains of 3-oxo-4-pregnene-20-carboxyl-CoA (3-OPC-CoA) to yield 3-oxo-4,17-pregnadiene-20-carboxyl-CoA (3-OPDC-CoA). Also able to dehydrogenate steroyl-CoA such as 3-oxo-chol-4-en-24-oyl-CoA (3-OCO-CoA), 1beta-(2'-propanoyl-CoA)-3a-alpha-H- 7a-beta-methylhexahydro-4-indanone (indanone-CoA ester), hexahydroindanone and pregenenone. The sequence is that of Acyl-CoA dehydrogenase FadE29 (fadE29) from Mycobacterium tuberculosis (strain ATCC 25618 / H37Rv).